We begin with the raw amino-acid sequence, 407 residues long: Argininosuccinate synthase (407 aa).

ATP is bound by residues 11–19 (AYSGGLDTS) and alanine 38. L-citrulline-binding residues include tyrosine 91 and serine 96. Residue glycine 121 coordinates ATP. 3 residues coordinate L-aspartate: threonine 123, asparagine 127, and aspartate 128. Asparagine 127 serves as a coordination point for L-citrulline. Positions 131, 181, 190, 266, and 278 each coordinate L-citrulline.

Belongs to the argininosuccinate synthase family. Type 1 subfamily. As to quaternary structure, homotetramer.

It is found in the cytoplasm. The enzyme catalyses L-citrulline + L-aspartate + ATP = 2-(N(omega)-L-arginino)succinate + AMP + diphosphate + H(+). It participates in amino-acid biosynthesis; L-arginine biosynthesis; L-arginine from L-ornithine and carbamoyl phosphate: step 2/3. This chain is Argininosuccinate synthase, found in Campylobacter concisus (strain 13826).